We begin with the raw amino-acid sequence, 555 residues long: Vetispiradiene synthase 1 (555 aa).

The Mg(2+) site is built by aspartate 308, aspartate 312, aspartate 451, threonine 455, and glutamate 459. The short motif at 308-312 is the DDXXD motif element; that stretch reads DDTFD.

The protein belongs to the terpene synthase family. Tpsa subfamily. Requires Mg(2+) as cofactor.

The protein localises to the cytoplasm. The enzyme catalyses (2E,6E)-farnesyl diphosphate = (-)-vetispiradiene + diphosphate. It functions in the pathway secondary metabolite biosynthesis; terpenoid biosynthesis. In terms of biological role, sesquiterpene synthase that catalyzes the formation of vetispiradiene from trans,trans-farnesyl diphosphate. The initial internal cyclization produces the monocyclic intermediate germacrene A. This chain is Vetispiradiene synthase 1, found in Hyoscyamus muticus (Egyptian henbane).